A 383-amino-acid polypeptide reads, in one-letter code: Putative glutamate--cysteine ligase 2 (383 aa).

This sequence belongs to the glutamate--cysteine ligase type 2 family. YbdK subfamily.

It catalyses the reaction L-cysteine + L-glutamate + ATP = gamma-L-glutamyl-L-cysteine + ADP + phosphate + H(+). ATP-dependent carboxylate-amine ligase which exhibits weak glutamate--cysteine ligase activity. This is Putative glutamate--cysteine ligase 2 from Clavibacter sepedonicus (Clavibacter michiganensis subsp. sepedonicus).